Reading from the N-terminus, the 147-residue chain is Hemoglobin subunit beta-H0 (147 aa).

A Globin domain is found at 3-147 (HFTAEEKAAI…VATALSHKYH (145 aa)). Heme b-binding residues include His64 and His93.

It belongs to the globin family. In terms of assembly, heterotetramer of two alpha chains and two beta chains. As to expression, red blood cells.

In terms of biological role, this is a minor early embryonic beta chain. The protein is Hemoglobin subunit beta-H0 (Hbb-bh0) of Mus musculus (Mouse).